The sequence spans 421 residues: MEVHPISEFASPFEVFKCIERDFKVAGLLESIGGPQYKARYSVIAWSTNGYLKIHDDPVNILNGYLKDLKLADIPGLFKGGMIGYISYDAVRFWEKIRDLKPAAEDWPYAEFFTPDNIIIYDHNEGKVYVNADLSSVGGCGDIGEFKVSFYDESLNKNSYERIVSESLEYIRSGYIFQVVLSRFYRYIFSGDPLRIYYNLRRINPSPYMFYLKFDEKYLIGSSPELLFRVQDNIVETYPIAGTRPRGADQEEDLKLELELMNSEKDKAEHLMLVDLARNDLGKVCVPGTVKVPELMYVEKYSHVQHIVSKVIGTLKKKYNALNVLSATFPAGTVSGAPKPMAMNIIETLEEYKRGPYAGAVGFISADGNAEFAIAIRTAFLNKELLRIHAGAGIVYDSNPESEYFETEHKLKALKTAIGVR.

L-tryptophan is bound by residues Ser31 and Pro207 to Met209. Position 242–243 (Gly242–Thr243) interacts with chorismate. Glu269 contributes to the Mg(2+) binding site. Chorismate contacts are provided by residues Tyr357, Arg377, Gly391 to Gly393, and Gly393. Glu406 serves as a coordination point for Mg(2+).

Belongs to the anthranilate synthase component I family. Heterotetramer consisting of two non-identical subunits: a beta subunit (TrpG) and a large alpha subunit (TrpE). Mg(2+) is required as a cofactor.

It carries out the reaction chorismate + L-glutamine = anthranilate + pyruvate + L-glutamate + H(+). The protein operates within amino-acid biosynthesis; L-tryptophan biosynthesis; L-tryptophan from chorismate: step 1/5. Cooperatively feedback inhibited by tryptophan. Its function is as follows. Part of a heterotetrameric complex that catalyzes the two-step biosynthesis of anthranilate, an intermediate in the biosynthesis of L-tryptophan. In the first step, the glutamine-binding beta subunit (TrpG) of anthranilate synthase (AS) provides the glutamine amidotransferase activity which generates ammonia as a substrate that, along with chorismate, is used in the second step, catalyzed by the large alpha subunit of AS (TrpE) to produce anthranilate. In the absence of TrpG, TrpE can synthesize anthranilate directly from chorismate and high concentrations of ammonia. This chain is Anthranilate synthase component 1 (trpE), found in Saccharolobus solfataricus (strain ATCC 35092 / DSM 1617 / JCM 11322 / P2) (Sulfolobus solfataricus).